Consider the following 333-residue polypeptide: Fructose-1,6-bisphosphatase class 1 (333 aa).

Residues glutamate 90, aspartate 112, leucine 114, and aspartate 115 each coordinate Mg(2+). Substrate contacts are provided by residues 115–118, asparagine 207, and lysine 273; that span reads DGSS. Glutamate 279 lines the Mg(2+) pocket.

The protein belongs to the FBPase class 1 family. In terms of assembly, homotetramer. Mg(2+) is required as a cofactor.

The protein localises to the cytoplasm. It catalyses the reaction beta-D-fructose 1,6-bisphosphate + H2O = beta-D-fructose 6-phosphate + phosphate. It functions in the pathway carbohydrate biosynthesis; gluconeogenesis. In Azoarcus sp. (strain BH72), this protein is Fructose-1,6-bisphosphatase class 1.